Reading from the N-terminus, the 476-residue chain is Glutamyl-tRNA(Gln) amidotransferase subunit A (476 aa).

Catalysis depends on charge relay system residues K69 and S144. The active-site Acyl-ester intermediate is S168.

The protein belongs to the amidase family. GatA subfamily. In terms of assembly, heterotrimer of A, B and C subunits.

It carries out the reaction L-glutamyl-tRNA(Gln) + L-glutamine + ATP + H2O = L-glutaminyl-tRNA(Gln) + L-glutamate + ADP + phosphate + H(+). Allows the formation of correctly charged Gln-tRNA(Gln) through the transamidation of misacylated Glu-tRNA(Gln) in organisms which lack glutaminyl-tRNA synthetase. The reaction takes place in the presence of glutamine and ATP through an activated gamma-phospho-Glu-tRNA(Gln). The protein is Glutamyl-tRNA(Gln) amidotransferase subunit A of Sulfolobus acidocaldarius (strain ATCC 33909 / DSM 639 / JCM 8929 / NBRC 15157 / NCIMB 11770).